A 119-amino-acid polypeptide reads, in one-letter code: Anther-specific protein BCP1 (119 aa).

A signal peptide spans 1 to 23; that stretch reads MGRQNVVVVFGLVFLAVLGLAAA. Low complexity predominate over residues 24 to 42; it reads ASSPSPSASPSKAPSTSTP. The tract at residues 24–95 is disordered; the sequence is ASSPSPSASP…PSGSADSADS (72 aa). Over 24 to 98 the chain is Extracellular; sequence ASSPSPSASP…SADSADSGAA (75 aa). The segment covering 56–69 has biased composition (acidic residues); the sequence is TDDDAAASPGDDDV. A compositionally biased stretch (low complexity) spans 82 to 95; the sequence is GSNGPSGSADSADS. A helical transmembrane segment spans residues 99 to 118; the sequence is ALGVSAVVVGVTSIVGSFLF. A topological domain (cytoplasmic) is located at residue F119.

As to expression, expressed in mature pollen grains, developing microspores and tapetal cells.

It localises to the membrane. In terms of biological role, required for pollen fertility and development. Active in both diploid tapetum and haploid microspores. Major pollen protein. The protein is Anther-specific protein BCP1 (BCP1) of Brassica campestris (Field mustard).